Consider the following 40-residue polypeptide: Dolichyl-diphosphooligosaccharide--protein glycosyltransferase subunit 4 (40 aa).

Residues 1–4 (MITD) are Lumenal-facing. The helical transmembrane segment at 5-25 (VQLAIFSNVLGVFLFLLVVAY) threads the bilayer. The Cytoplasmic portion of the chain corresponds to 26–40 (HYINANTGKPSAKAK).

It belongs to the OST4 family. Component of the oligosaccharyltransferase (OST) complex.

It localises to the endoplasmic reticulum membrane. Its function is as follows. Subunit of the oligosaccharyl transferase (OST) complex that catalyzes the initial transfer of a defined glycan (Glc(3)Man(9)GlcNAc(2) in eukaryotes) from the lipid carrier dolichol-pyrophosphate to an asparagine residue within an Asn-X-Ser/Thr consensus motif in nascent polypeptide chains, the first step in protein N-glycosylation. N-glycosylation occurs cotranslationally and the complex associates with the Sec61 complex at the channel-forming translocon complex that mediates protein translocation across the endoplasmic reticulum (ER). All subunits are required for a maximal enzyme activity. The sequence is that of Dolichyl-diphosphooligosaccharide--protein glycosyltransferase subunit 4 from Drosophila erecta (Fruit fly).